The chain runs to 182 residues: ATP synthase subunit b (182 aa).

A helical membrane pass occupies residues 25 to 45 (VVLAGFAVLFYIVVKFVVPMF).

The protein belongs to the ATPase B chain family. As to quaternary structure, F-type ATPases have 2 components, F(1) - the catalytic core - and F(0) - the membrane proton channel. F(1) has five subunits: alpha(3), beta(3), gamma(1), delta(1), epsilon(1). F(0) has three main subunits: a(1), b(2) and c(10-14). The alpha and beta chains form an alternating ring which encloses part of the gamma chain. F(1) is attached to F(0) by a central stalk formed by the gamma and epsilon chains, while a peripheral stalk is formed by the delta and b chains.

It is found in the cell membrane. Functionally, f(1)F(0) ATP synthase produces ATP from ADP in the presence of a proton or sodium gradient. F-type ATPases consist of two structural domains, F(1) containing the extramembraneous catalytic core and F(0) containing the membrane proton channel, linked together by a central stalk and a peripheral stalk. During catalysis, ATP synthesis in the catalytic domain of F(1) is coupled via a rotary mechanism of the central stalk subunits to proton translocation. Component of the F(0) channel, it forms part of the peripheral stalk, linking F(1) to F(0). This chain is ATP synthase subunit b, found in Arthrobacter sp. (strain FB24).